We begin with the raw amino-acid sequence, 396 residues long: 1-deoxy-D-xylulose 5-phosphate reductoisomerase (396 aa).

Positions 10, 11, 12, 13, 36, 37, 38, and 124 each coordinate NADPH. 1-deoxy-D-xylulose 5-phosphate is bound at residue Lys125. An NADPH-binding site is contributed by Glu126. Residue Asp150 participates in Mn(2+) binding. 4 residues coordinate 1-deoxy-D-xylulose 5-phosphate: Ser151, Glu152, Ser186, and His209. Position 152 (Glu152) interacts with Mn(2+). Residue Gly215 participates in NADPH binding. 1-deoxy-D-xylulose 5-phosphate-binding residues include Ser222, Asn227, Lys228, and Glu231. Glu231 lines the Mn(2+) pocket.

It belongs to the DXR family. The cofactor is Mg(2+). It depends on Mn(2+) as a cofactor.

It carries out the reaction 2-C-methyl-D-erythritol 4-phosphate + NADP(+) = 1-deoxy-D-xylulose 5-phosphate + NADPH + H(+). It participates in isoprenoid biosynthesis; isopentenyl diphosphate biosynthesis via DXP pathway; isopentenyl diphosphate from 1-deoxy-D-xylulose 5-phosphate: step 1/6. Functionally, catalyzes the NADPH-dependent rearrangement and reduction of 1-deoxy-D-xylulose-5-phosphate (DXP) to 2-C-methyl-D-erythritol 4-phosphate (MEP). This Actinobacillus pleuropneumoniae serotype 5b (strain L20) protein is 1-deoxy-D-xylulose 5-phosphate reductoisomerase.